The sequence spans 429 residues: Histidine--tRNA ligase (429 aa).

This sequence belongs to the class-II aminoacyl-tRNA synthetase family. In terms of assembly, homodimer.

It localises to the cytoplasm. The enzyme catalyses tRNA(His) + L-histidine + ATP = L-histidyl-tRNA(His) + AMP + diphosphate + H(+). The chain is Histidine--tRNA ligase from Streptococcus pneumoniae (strain CGSP14).